We begin with the raw amino-acid sequence, 309 residues long: Zinc transporter ZIPB (309 aa).

Over 1-22 the chain is Periplasmic; sequence MNQPSSLAADLRGAWHAQAQSH. The helical transmembrane segment at 23 to 50 threads the bilayer; it reads PLITLGLAASAAGVVLLLVAGIVNALTG. Topologically, residues 51-55 are extracellular; the sequence is ENRVH. A helical membrane pass occupies residues 56-81; sequence VGYAVLGGAAGFAATALGALMALGLR. The Periplasmic segment spans residues 82-83; that stretch reads AI. A helical membrane pass occupies residues 84–119; that stretch reads SARTQDAMLGFAAGMMLAASAFSLILPGLDAAGTIV. Asp89 serves as a coordination point for Zn(2+). Met99 is a Cd(2+) binding site. At 120 to 121 the chain is on the extracellular side; that stretch reads GP. Residues 122 to 145 form a helical membrane-spanning segment; the sequence is GPAAAAVVALGLGLGVLLMLGLDY. Asp144 provides a ligand contact to Zn(2+). A Cd(2+)-binding site is contributed by Asp144. At 146–165 the chain is on the periplasmic side; sequence FTPHEHERTGHQGPEAARVN. Residues 166 to 190 form a helical membrane-spanning segment; that stretch reads RVWLFVLTIILHNLPEGMAIGVSFA. His177 lines the Zn(2+) pocket. Cd(2+) is bound by residues His177, Asn178, and Glu181. Glu181 provides a ligand contact to Zn(2+). Over 191–192 the chain is Extracellular; sequence TG. A helical transmembrane segment spans residues 193–222; that stretch reads DLRIGLPLTSAIAIQDVPEGLAVALALRAV. Gln207 is a binding site for Zn(2+). Gln207, Asp208, and Glu211 together coordinate Cd(2+). Glu211 is a Zn(2+) binding site. Topologically, residues 223–224 are periplasmic; it reads GL. Residues 225 to 251 form a helical membrane-spanning segment; the sequence is PIGRAVLVAVASGLMEPLGALVGVGIS. Residue Glu240 participates in Cd(2+) binding. The Extracellular portion of the chain corresponds to 252 to 255; sequence SGFA. The chain crosses the membrane as a helical span at residues 256 to 275; the sequence is LAYPISMGLAAGAMIFVVSH. Zn(2+) contacts are provided by His275, Glu276, and His286. His275 provides a ligand contact to Cd(2+). Residues 276-287 lie on the Periplasmic side of the membrane; sequence EVIPETHRNGHE. Residues 288 to 308 form a helical membrane-spanning segment; sequence TTATVGLMAGFALMMFLDTAL. Gly309 is a topological domain (extracellular).

Belongs to the ZIP transporter (TC 2.A.5) family. Homodimer. Also exists as a monomer.

The protein localises to the cell inner membrane. It catalyses the reaction Zn(2+)(in) = Zn(2+)(out). The enzyme catalyses Cd(2+)(in) = Cd(2+)(out). Selective electrodiffusional channel that mediates the uptake of Zn(2+). Exploits in vivo zinc concentration gradients (maintained by cellular zinc homeostasis) to passively move zinc ions into the cytoplasm. ZIPB-mediated zinc flux is dependent upon pH, but independent of the proton motive force. Is also able to import Cd(2+), but is not permeable to Co(2+), Cu(2+), Fe(2+), Mn(2+) and Ni(2+). The sequence is that of Zinc transporter ZIPB from Bordetella bronchiseptica (strain ATCC BAA-588 / NCTC 13252 / RB50) (Alcaligenes bronchisepticus).